The chain runs to 340 residues: Ferrochelatase (340 aa).

Positions 218 and 298 each coordinate Fe cation.

This sequence belongs to the ferrochelatase family.

The protein resides in the cytoplasm. It catalyses the reaction heme b + 2 H(+) = protoporphyrin IX + Fe(2+). It functions in the pathway porphyrin-containing compound metabolism; protoheme biosynthesis; protoheme from protoporphyrin-IX: step 1/1. In terms of biological role, catalyzes the ferrous insertion into protoporphyrin IX. The polypeptide is Ferrochelatase (Wolbachia sp. subsp. Brugia malayi (strain TRS)).